A 425-amino-acid chain; its full sequence is Enolase (425 aa).

Q161 contributes to the (2R)-2-phosphoglycerate binding site. E203 functions as the Proton donor in the catalytic mechanism. Residues D240, E283, and D310 each coordinate Mg(2+). (2R)-2-phosphoglycerate-binding residues include K335, R364, S365, and K386. K335 serves as the catalytic Proton acceptor.

This sequence belongs to the enolase family. Component of the RNA degradosome, a multiprotein complex involved in RNA processing and mRNA degradation. Requires Mg(2+) as cofactor.

The protein localises to the cytoplasm. The protein resides in the secreted. Its subcellular location is the cell surface. The enzyme catalyses (2R)-2-phosphoglycerate = phosphoenolpyruvate + H2O. The protein operates within carbohydrate degradation; glycolysis; pyruvate from D-glyceraldehyde 3-phosphate: step 4/5. In terms of biological role, catalyzes the reversible conversion of 2-phosphoglycerate (2-PG) into phosphoenolpyruvate (PEP). It is essential for the degradation of carbohydrates via glycolysis. This is Enolase from Ruthia magnifica subsp. Calyptogena magnifica.